The following is a 266-amino-acid chain: Protein-ADP-ribose hydrolase (266 aa).

Residues 74-265 enclose the Macro domain; the sequence is TDLKDLKPIK…LYKEAFNRDA (192 aa). Residues Asp-93, Ile-94, and Asn-107 each contribute to the ADP-D-ribose site. Zn(2+) is bound by residues Cys-113, His-118, and Cys-120. ADP-D-ribose is bound by residues Cys-120, Ile-121, Asp-122, Ser-212, Thr-213, Gly-214, and Phe-216.

Belongs to the MacroD-type family. Zn-Macro subfamily. It depends on Zn(2+) as a cofactor.

It catalyses the reaction 4-O-(ADP-D-ribosyl)-L-aspartyl-[protein] + H2O = L-aspartyl-[protein] + ADP-D-ribose + H(+). Functionally, ADP-ribosylhydrolase that specifically reverses the SirTM-mediated mono-ADP-ribosylation at an asparatate residue of GcvH-L, by releasing ADP-ribose from the target protein. May play a role in the regulation of the response to host-induced oxidative stress. This Staphylococcus aureus (strain MRSA252) protein is Protein-ADP-ribose hydrolase.